Consider the following 75-residue polypeptide: Putative membrane protein insertion efficiency factor (75 aa).

This sequence belongs to the UPF0161 family.

The protein resides in the cell membrane. Its function is as follows. Could be involved in insertion of integral membrane proteins into the membrane. This is Putative membrane protein insertion efficiency factor from Halalkalibacterium halodurans (strain ATCC BAA-125 / DSM 18197 / FERM 7344 / JCM 9153 / C-125) (Bacillus halodurans).